The chain runs to 123 residues: Glutaredoxin-like protein (123 aa).

In terms of domain architecture, Glutaredoxin spans 27–123 (INEVEESITN…GTLFNDLKKK (97 aa)).

It belongs to the glutaredoxin family.

This Dictyostelium discoideum (Social amoeba) protein is Glutaredoxin-like protein (grxB).